Consider the following 150-residue polypeptide: Lipoprotein signal peptidase (150 aa).

Helical transmembrane passes span 58–78 (FFII…FKST) and 85–107 (SFSL…GYVV). Residues Asp-108 and Asp-122 contribute to the active site. Residues 117–137 (VFNLADFFITGGVLLLTFLIL) form a helical membrane-spanning segment.

It belongs to the peptidase A8 family.

It localises to the cell membrane. The enzyme catalyses Release of signal peptides from bacterial membrane prolipoproteins. Hydrolyzes -Xaa-Yaa-Zaa-|-(S,diacylglyceryl)Cys-, in which Xaa is hydrophobic (preferably Leu), and Yaa (Ala or Ser) and Zaa (Gly or Ala) have small, neutral side chains.. The protein operates within protein modification; lipoprotein biosynthesis (signal peptide cleavage). This protein specifically catalyzes the removal of signal peptides from prolipoproteins. The sequence is that of Lipoprotein signal peptidase from Caldicellulosiruptor bescii (strain ATCC BAA-1888 / DSM 6725 / KCTC 15123 / Z-1320) (Anaerocellum thermophilum).